We begin with the raw amino-acid sequence, 608 residues long: Pentatricopeptide repeat-containing protein At5g40410, mitochondrial (608 aa).

The N-terminal 28 residues, 1–28 (MIKANVYSCSKFRFLYRRRFLSQSSFVH), are a transit peptide targeting the mitochondrion. PPR repeat units follow at residues 30 to 64 (LDAN…VSYR), 65 to 95 (HGFI…MPER), 96 to 130 (DLVS…EVGF), 133 to 167 (NEVT…GVLE), 168 to 198 (EVKV…LSIK), 199 to 233 (NLVS…GHEP), 234 to 268 (DQAT…GFSG), 269 to 299 (NKCI…ITSP), 300 to 334 (DSMA…GISP), 335 to 365 (DHVT…MSKR), and 371 to 401 (RLDH…MPME). Positions 406–481 (VWGALLGACR…ASGCSYIEHG (76 aa)) are type E motif. The interval 482–512 (NKIHKFVVGDWSHPESEKIQKKLKEIRKKMK) is type E(+) motif. The tract at residues 514–608 (EMGYKSKTEF…DGSCSCSDYW (95 aa)) is type DYW motif.

The protein belongs to the PPR family. PCMP-H subfamily.

The protein resides in the mitochondrion. The polypeptide is Pentatricopeptide repeat-containing protein At5g40410, mitochondrial (PCMP-H15) (Arabidopsis thaliana (Mouse-ear cress)).